Here is a 361-residue protein sequence, read N- to C-terminus: Chorismate synthase (361 aa).

Positions 48 and 54 each coordinate NADP(+). Residues 125-127 (RSS), 238-239 (NA), Gly-278, 293-297 (KPTSS), and Arg-319 contribute to the FMN site.

The protein belongs to the chorismate synthase family. Homotetramer. FMNH2 is required as a cofactor.

The catalysed reaction is 5-O-(1-carboxyvinyl)-3-phosphoshikimate = chorismate + phosphate. It participates in metabolic intermediate biosynthesis; chorismate biosynthesis; chorismate from D-erythrose 4-phosphate and phosphoenolpyruvate: step 7/7. Functionally, catalyzes the anti-1,4-elimination of the C-3 phosphate and the C-6 proR hydrogen from 5-enolpyruvylshikimate-3-phosphate (EPSP) to yield chorismate, which is the branch point compound that serves as the starting substrate for the three terminal pathways of aromatic amino acid biosynthesis. This reaction introduces a second double bond into the aromatic ring system. The polypeptide is Chorismate synthase (Yersinia pseudotuberculosis serotype O:1b (strain IP 31758)).